Here is a 313-residue protein sequence, read N- to C-terminus: Ribosomal protein L11 methyltransferase (313 aa).

T164, G185, D207, and N249 together coordinate S-adenosyl-L-methionine.

This sequence belongs to the methyltransferase superfamily. PrmA family.

The protein resides in the cytoplasm. It carries out the reaction L-lysyl-[protein] + 3 S-adenosyl-L-methionine = N(6),N(6),N(6)-trimethyl-L-lysyl-[protein] + 3 S-adenosyl-L-homocysteine + 3 H(+). Functionally, methylates ribosomal protein L11. This Clostridium botulinum (strain Alaska E43 / Type E3) protein is Ribosomal protein L11 methyltransferase.